Here is a 147-residue protein sequence, read N- to C-terminus: Large ribosomal subunit protein uL13 (147 aa).

It belongs to the universal ribosomal protein uL13 family. In terms of assembly, part of the 50S ribosomal subunit.

In terms of biological role, this protein is one of the early assembly proteins of the 50S ribosomal subunit, although it is not seen to bind rRNA by itself. It is important during the early stages of 50S assembly. In Streptomyces griseus subsp. griseus (strain JCM 4626 / CBS 651.72 / NBRC 13350 / KCC S-0626 / ISP 5235), this protein is Large ribosomal subunit protein uL13.